We begin with the raw amino-acid sequence, 721 residues long: Photosystem I P700 chlorophyll a apoprotein A1 (721 aa).

8 helical membrane-spanning segments follow: residues 61–84 (VFSA…FHGA), 147–170 (LYCT…FHYH), 186–210 (LNHH…HVSL), 282–300 (TAHH…GHMY), 337–360 (WHAQ…HHMY), 376–402 (LSLF…IFMV), 424–446 (AIVS…LYIH), and 522–540 (FLVH…LILL). Positions 564 and 573 each coordinate [4Fe-4S] cluster. 2 helical membrane-spanning segments follow: residues 580-601 (HVFL…HFSW) and 655-677 (LSAY…MFLF). Residue histidine 666 participates in chlorophyll a' binding. Chlorophyll a is bound by residues methionine 674 and tyrosine 682. Tryptophan 683 lines the phylloquinone pocket. A helical transmembrane segment spans residues 715–721 (AVGVAHY).

It belongs to the PsaA/PsaB family. The PsaA/B heterodimer binds the P700 chlorophyll special pair and subsequent electron acceptors. PSI consists of a core antenna complex that captures photons, and an electron transfer chain that converts photonic excitation into a charge separation. The eukaryotic PSI reaction center is composed of at least 11 subunits. The cofactor is P700 is a chlorophyll a/chlorophyll a' dimer, A0 is one or more chlorophyll a, A1 is one or both phylloquinones and FX is a shared 4Fe-4S iron-sulfur center..

The protein localises to the plastid. Its subcellular location is the chloroplast thylakoid membrane. The enzyme catalyses reduced [plastocyanin] + hnu + oxidized [2Fe-2S]-[ferredoxin] = oxidized [plastocyanin] + reduced [2Fe-2S]-[ferredoxin]. Its function is as follows. PsaA and PsaB bind P700, the primary electron donor of photosystem I (PSI), as well as the electron acceptors A0, A1 and FX. PSI is a plastocyanin-ferredoxin oxidoreductase, converting photonic excitation into a charge separation, which transfers an electron from the donor P700 chlorophyll pair to the spectroscopically characterized acceptors A0, A1, FX, FA and FB in turn. Oxidized P700 is reduced on the lumenal side of the thylakoid membrane by plastocyanin. This is Photosystem I P700 chlorophyll a apoprotein A1 from Ginkgo biloba (Ginkgo).